A 342-amino-acid polypeptide reads, in one-letter code: Ferredoxin--NADP reductase (342 aa).

Residues Cys17, Asp36, Gln44, Tyr49, Ile89, Phe124, Asp289, and Thr330 each contribute to the FAD site.

Belongs to the ferredoxin--NADP reductase type 2 family. As to quaternary structure, homodimer. Requires FAD as cofactor.

The catalysed reaction is 2 reduced [2Fe-2S]-[ferredoxin] + NADP(+) + H(+) = 2 oxidized [2Fe-2S]-[ferredoxin] + NADPH. This chain is Ferredoxin--NADP reductase, found in Rhodopseudomonas palustris (strain BisB5).